Reading from the N-terminus, the 63-residue chain is Prokaryotic ubiquitin-like protein Pup (63 aa).

A disordered region spans residues 1–28; it reads MSDRQTQIPAGGGREDDHDDQVQSAGQV. The tract at residues 19 to 57 is ARC ATPase binding; the sequence is DDQVQSAGQVQVNTEGVDDLLDEIDGLLENNAEEFVRSY. An Isoglutamyl lysine isopeptide (Glu-Lys) (interchain with K-? in acceptor proteins) cross-link involves residue E63.

Belongs to the prokaryotic ubiquitin-like protein family. In terms of assembly, strongly interacts with the proteasome-associated ATPase ARC through a hydrophobic interface; the interacting region of Pup lies in its C-terminal half. There is one Pup binding site per ARC hexamer ring.

The protein operates within protein degradation; proteasomal Pup-dependent pathway. Functionally, protein modifier that is covalently attached to lysine residues of substrate proteins, thereby targeting them for proteasomal degradation. The tagging system is termed pupylation. In Corynebacterium efficiens (strain DSM 44549 / YS-314 / AJ 12310 / JCM 11189 / NBRC 100395), this protein is Prokaryotic ubiquitin-like protein Pup.